The sequence spans 391 residues: GTPase HflX (391 aa).

The interval 162–181 is disordered; sequence LAQQRGGAKGTRGASRGAGE. A Hflx-type G domain is found at 222-391; it reads KIGAIVGYTN…KITDIIIFDK (170 aa). GTP contacts are provided by residues 228-235, 253-257, 278-281, 344-347, and 369-371; these read GYTNAGKS, FATLD, DTVG, NKMD, and SVT. Mg(2+) contacts are provided by S235 and T255.

The protein belongs to the TRAFAC class OBG-HflX-like GTPase superfamily. HflX GTPase family. Monomer. Associates with the 50S ribosomal subunit. The cofactor is Mg(2+).

The protein resides in the cytoplasm. Its function is as follows. GTPase that associates with the 50S ribosomal subunit and may have a role during protein synthesis or ribosome biogenesis. This is GTPase HflX from Treponema denticola (strain ATCC 35405 / DSM 14222 / CIP 103919 / JCM 8153 / KCTC 15104).